The primary structure comprises 396 residues: Obg-like ATPase 1 (396 aa).

Positions 23 to 283 constitute an OBG-type G domain; sequence LKIGIVGLPN…LSAEERQKYL (261 aa). 32–37 is a binding site for ATP; that stretch reads NVGKST. Residues S36 and T56 each contribute to the Mg(2+) site. L231 is a binding site for ATP. Residues 267-274 carry the Nuclear export signal motif; it reads LELRLQEL. K294 is modified (N6-acetyllysine). Residues 304 to 387 form the TGS domain; that stretch reads QLEYFFTAGP…EDGDIIFFKF (84 aa).

Belongs to the TRAFAC class OBG-HflX-like GTPase superfamily. OBG GTPase family. YchF/OLA1 subfamily. Monomer. Mg(2+) serves as cofactor.

It localises to the cytoplasm. It is found in the nucleus. Its subcellular location is the nucleolus. Hydrolyzes ATP, and can also hydrolyze GTP with lower efficiency. Has lower affinity for GTP. The protein is Obg-like ATPase 1 of Bos taurus (Bovine).